Reading from the N-terminus, the 126-residue chain is Large ribosomal subunit protein bL12 (126 aa).

The protein belongs to the bacterial ribosomal protein bL12 family. Homodimer. Part of the ribosomal stalk of the 50S ribosomal subunit. Forms a multimeric L10(L12)X complex, where L10 forms an elongated spine to which 2 to 4 L12 dimers bind in a sequential fashion. Binds GTP-bound translation factors.

Forms part of the ribosomal stalk which helps the ribosome interact with GTP-bound translation factors. Is thus essential for accurate translation. This Caulobacter sp. (strain K31) protein is Large ribosomal subunit protein bL12.